Reading from the N-terminus, the 277-residue chain is Cation-dependent mannose-6-phosphate receptor (277 aa).

Residues 1–26 (MFPFYSCWRTGLLLLLLAVAVRESWQ) form the signal peptide. At 27–185 (TEEKTCDLVG…SLACSPEISH (159 aa)) the chain is on the lumenal side. The region spanning 30 to 181 (KTCDLVGEKG…EMDSSLACSP (152 aa)) is the MRH domain. An intrachain disulfide couples cysteine 32 to cysteine 78. Asparagine 57, asparagine 83, asparagine 94, asparagine 107, and asparagine 113 each carry an N-linked (GlcNAc...) asparagine glycan. Intrachain disulfides connect cysteine 132/cysteine 167 and cysteine 145/cysteine 179. Residues 186-210 (LSVGSILLVTFASLVAVYVVGGFLY) traverse the membrane as a helical segment. The Cytoplasmic segment spans residues 211–277 (QRLVVGAKGM…EERDDHLLPM (67 aa)). Residues 256 to 277 (RGVGDDQLGEESEERDDHLLPM) form a disordered region. Serine 267 carries the post-translational modification Phosphoserine.

As to quaternary structure, homodimer. Binds GGA1, GGA2 and GGA3.

It localises to the lysosome membrane. Its function is as follows. Transport of phosphorylated lysosomal enzymes from the Golgi complex and the cell surface to lysosomes. Lysosomal enzymes bearing phosphomannosyl residues bind specifically to mannose-6-phosphate receptors in the Golgi apparatus and the resulting receptor-ligand complex is transported to an acidic prelyosomal compartment where the low pH mediates the dissociation of the complex. In Homo sapiens (Human), this protein is Cation-dependent mannose-6-phosphate receptor (M6PR).